Here is a 487-residue protein sequence, read N- to C-terminus: Glycogen synthase (487 aa).

K20 is a binding site for ADP-alpha-D-glucose.

This sequence belongs to the glycosyltransferase 1 family. Bacterial/plant glycogen synthase subfamily.

It carries out the reaction [(1-&gt;4)-alpha-D-glucosyl](n) + ADP-alpha-D-glucose = [(1-&gt;4)-alpha-D-glucosyl](n+1) + ADP + H(+). It participates in glycan biosynthesis; glycogen biosynthesis. Functionally, synthesizes alpha-1,4-glucan chains using ADP-glucose. This Aliivibrio fischeri (strain ATCC 700601 / ES114) (Vibrio fischeri) protein is Glycogen synthase.